Reading from the N-terminus, the 261-residue chain is MAEHTEETNLLQPTSRFQLLKDILGLYPAIDGEKHKSTLGTAGWLRAGVLGANDAIVSVAASNSQGQVLIAALAALFAGALSMAVGEYVSVASQKDMEDADLEKERWELENNPEGELEELSLLYQERGVDPVTATEVARQLMAKDALQAHAIEELGIRDFSQARPFAAGMVSFAMFITFGCIPLLVGAWIPYRWYAIGAITGVSLILLAISGAVGAFFGGANMLLGAFRVTYGGALAMAITIGVGFLSETLNISDMSYRDE.

The helical transmembrane segment at 66-86 (GQVLIAALAALFAGALSMAVG) threads the bilayer. Positions 105, 108, 116, 119, and 154 each coordinate Fe cation. Helical transmembrane passes span 170–190 (MVSF…GAWI), 197–217 (IGAI…VGAF), and 233–253 (GGAL…TLNI).

It belongs to the CCC1 family.

It is found in the vacuole membrane. It carries out the reaction Fe(2+)(in) = Fe(2+)(out). Functionally, vacuolar iron transporter involved in the transfer of iron ions from the cytosol to the vacuole for intracellular iron storage. The sequence is that of Vacuolar iron transporter from Acanthamoeba castellanii (strain ATCC 30010 / Neff).